We begin with the raw amino-acid sequence, 393 residues long: Homoserine O-succinyltransferase (393 aa).

The AB hydrolase-1 domain occupies 62-372 (NAVLVCHALN…PHGHDAFLLD (311 aa)). The Nucleophile role is filled by serine 168. Arginine 238 provides a ligand contact to substrate. Active-site residues include aspartate 333 and histidine 366. Aspartate 367 lines the substrate pocket.

It belongs to the AB hydrolase superfamily. MetX family. In terms of assembly, homodimer.

Its subcellular location is the cytoplasm. The enzyme catalyses L-homoserine + succinyl-CoA = O-succinyl-L-homoserine + CoA. Its pathway is amino-acid biosynthesis; L-methionine biosynthesis via de novo pathway; O-succinyl-L-homoserine from L-homoserine: step 1/1. In terms of biological role, transfers a succinyl group from succinyl-CoA to L-homoserine, forming succinyl-L-homoserine. The protein is Homoserine O-succinyltransferase of Cupriavidus taiwanensis (strain DSM 17343 / BCRC 17206 / CCUG 44338 / CIP 107171 / LMG 19424 / R1) (Ralstonia taiwanensis (strain LMG 19424)).